The following is a 61-amino-acid chain: Small ribosomal subunit protein uS14 (61 aa).

Zn(2+) is bound by residues Cys24, Cys27, Cys40, and Cys43.

The protein belongs to the universal ribosomal protein uS14 family. Zinc-binding uS14 subfamily. As to quaternary structure, part of the 30S ribosomal subunit. Contacts proteins S3 and S10. Zn(2+) serves as cofactor.

In terms of biological role, binds 16S rRNA, required for the assembly of 30S particles and may also be responsible for determining the conformation of the 16S rRNA at the A site. This Staphylococcus carnosus (strain TM300) protein is Small ribosomal subunit protein uS14.